Here is a 171-residue protein sequence, read N- to C-terminus: uncharacterized protein (171 aa).

An N-terminal signal peptide occupies residues 1–17 (MLKRIIWILFLLGLTWG).

In terms of biological role, part of the elfADCG-ycbUVF fimbrial operon, which promotes adhesion of bacteria to different abiotic surfaces. This is an uncharacterized protein from Escherichia coli (strain K12).